Consider the following 250-residue polypeptide: CCN family member 5 (250 aa).

A signal peptide spans 1-23 (MRGSPLIRLLATSFLCLLSMVCA). Intrachain disulfides connect Cys22–Cys50, Cys26–Cys52, Cys32–Cys53, Cys39–Cys56, Cys64–Cys78, and Cys70–Cys100. Residues 24-103 (QLCRTPCTCP…DEDDGDCEVN (80 aa)) enclose the IGFBP N-terminal domain. In terms of domain architecture, VWFC spans 98-164 (GDCEVNGRRY…GKCCPEWVCD (67 aa)). Residues 194–238 (WPNWSTAWGPCSTTCGLGIATRVSNQNRFCQLEIQRRLCLPRPCL) enclose the TSP type-1 domain. An N-linked (GlcNAc...) asparagine glycan is attached at Asn196.

Belongs to the CCN family.

It localises to the secreted. Functionally, may play an important role in modulating bone turnover. Promotes the adhesion of osteoblast cells and inhibits the binding of fibrinogen to integrin receptors. In addition, inhibits osteocalcin production. The chain is CCN family member 5 (Ccn5) from Rattus norvegicus (Rat).